Consider the following 424-residue polypeptide: Glutamyl-tRNA reductase (424 aa).

Substrate contacts are provided by residues 49-52, Ser107, 112-114, and Gln118; these read TCNR and EPQ. The active-site Nucleophile is the Cys50. 187–192 is a binding site for NADP(+); it reads GAGETI.

It belongs to the glutamyl-tRNA reductase family. In terms of assembly, homodimer.

The enzyme catalyses (S)-4-amino-5-oxopentanoate + tRNA(Glu) + NADP(+) = L-glutamyl-tRNA(Glu) + NADPH + H(+). The protein operates within porphyrin-containing compound metabolism; protoporphyrin-IX biosynthesis; 5-aminolevulinate from L-glutamyl-tRNA(Glu): step 1/2. Catalyzes the NADPH-dependent reduction of glutamyl-tRNA(Glu) to glutamate 1-semialdehyde (GSA). The sequence is that of Glutamyl-tRNA reductase from Chromohalobacter salexigens (strain ATCC BAA-138 / DSM 3043 / CIP 106854 / NCIMB 13768 / 1H11).